Here is a 210-residue protein sequence, read N- to C-terminus: Imidazole glycerol phosphate synthase subunit HisH (210 aa).

In terms of domain architecture, Glutamine amidotransferase type-1 spans 7-210 (KVVIIDTGCA…SQLIKNFLEM (204 aa)). Cysteine 82 serves as the catalytic Nucleophile. Catalysis depends on residues histidine 192 and glutamate 194.

In terms of assembly, heterodimer of HisH and HisF.

It is found in the cytoplasm. The enzyme catalyses 5-[(5-phospho-1-deoxy-D-ribulos-1-ylimino)methylamino]-1-(5-phospho-beta-D-ribosyl)imidazole-4-carboxamide + L-glutamine = D-erythro-1-(imidazol-4-yl)glycerol 3-phosphate + 5-amino-1-(5-phospho-beta-D-ribosyl)imidazole-4-carboxamide + L-glutamate + H(+). The catalysed reaction is L-glutamine + H2O = L-glutamate + NH4(+). The protein operates within amino-acid biosynthesis; L-histidine biosynthesis; L-histidine from 5-phospho-alpha-D-ribose 1-diphosphate: step 5/9. Functionally, IGPS catalyzes the conversion of PRFAR and glutamine to IGP, AICAR and glutamate. The HisH subunit catalyzes the hydrolysis of glutamine to glutamate and ammonia as part of the synthesis of IGP and AICAR. The resulting ammonia molecule is channeled to the active site of HisF. This Photobacterium profundum (strain SS9) protein is Imidazole glycerol phosphate synthase subunit HisH.